We begin with the raw amino-acid sequence, 225 residues long: Insulin-induced gene 2 protein (225 aa).

The Cytoplasmic portion of the chain corresponds to 1–28 (MAEGETESPRPKKCGPYISSVTSQSVNV). Residues 29–51 (VIRGVVLFFIGVFLALVLNLLQI) traverse the membrane as a helical segment. Topologically, residues 52–70 (QRNVTLFPPDVITSIFSSA) are lumenal. The chain crosses the membrane as a helical span at residues 71–88 (WWVPPCCGTASAVIGLLY). At 89-103 (PCIDRHLGEPHKFKR) the chain is on the cytoplasmic side. The helical transmembrane segment at 104 to 126 (EWSSVMRCVAVFVGINHASAKVD) threads the bilayer. At 127–129 (FDN) the chain is on the lumenal side. The chain crosses the membrane as a helical span at residues 130–148 (NFQFSLTLAALSVGLWWTF). The Cytoplasmic segment spans residues 149 to 153 (DRSRS). Position 151 is a phosphoserine (Ser151). The chain crosses the membrane as a helical span at residues 154–175 (GFGLGVGIAFLATVVTQLLVYN). The Lumenal portion of the chain corresponds to 176–189 (GVYQYTSPDFLYVR). A helical membrane pass occupies residues 190-207 (SWLPCIFFAGGITMGNIG). Over 208 to 225 (RQLAMYECKVIAEKSHQE) the chain is Cytoplasmic. Cys215 is subject to Cysteine sulfenic acid (-SOH); alternate. Cys215 is covalently cross-linked (Glycyl cysteine thioester (Cys-Gly) (interchain with G-Cter in ubiquitin); alternate). A KxHxx motif is present at residues 219–225 (AEKSHQE).

The protein belongs to the INSIG family. Interacts with SCAP; interaction is direct and only takes place in the presence of sterols; it prevents interaction between SCAP and the coat protein complex II (COPII). Associates with the SCAP-SREBP complex (composed of SCAP and SREBF1/SREBP1 or SREBF2/SREBP2); association is mediated via its interaction with SCAP and only takes place in the presence of sterols. Interacts with RNF139. Interacts with RNF145. Post-translationally, phosphorylation at Ser-151 by PCK1 reduces binding to oxysterol, disrupting the interaction between INSIG2 and SCAP, thereby promoting nuclear translocation of SREBP proteins (SREBF1/SREBP1 or SREBF2/SREBP2) and subsequent transcription of downstream lipogenesis-related genes. In terms of processing, polyubiquitinated by AMFR/gp78 at Cys-215 in some tissues such as adipose tissues, undifferentiated myoblasts and liver, leading to its degradation. In differentiated myotubes, Cys-215 oxidation prevents ubiquitination at the same site, resulting in protein stabilization. Oxidized at Cys-215 in differentiated myotubes, preventing ubiquitination at the same site, and resulting in protein stabilization. Expressed in liver, testis, kidney, spleen, intestine, brain and adrenal gland.

The protein localises to the endoplasmic reticulum membrane. In terms of biological role, oxysterol-binding protein that mediates feedback control of cholesterol synthesis by controlling both endoplasmic reticulum to Golgi transport of SCAP and degradation of HMGCR. Acts as a negative regulator of cholesterol biosynthesis by mediating the retention of the SCAP-SREBP complex in the endoplasmic reticulum, thereby blocking the processing of sterol regulatory element-binding proteins (SREBPs) SREBF1/SREBP1 and SREBF2/SREBP2. Binds oxysterol, including 22-hydroxycholesterol, 24-hydroxycholesterol, 25-hydroxycholesterol and 27-hydroxycholesterol, regulating interaction with SCAP and retention of the SCAP-SREBP complex in the endoplasmic reticulum. In presence of oxysterol, interacts with SCAP, retaining the SCAP-SREBP complex in the endoplasmic reticulum, thereby preventing SCAP from escorting SREBF1/SREBP1 and SREBF2/SREBP2 to the Golgi. Sterol deprivation or phosphorylation by PCK1 reduce oxysterol-binding, disrupting the interaction between INSIG2 and SCAP, thereby promoting Golgi transport of the SCAP-SREBP complex, followed by processing and nuclear translocation of SREBF1/SREBP1 and SREBF2/SREBP2. Also regulates cholesterol synthesis by regulating degradation of HMGCR: initiates the sterol-mediated ubiquitin-mediated endoplasmic reticulum-associated degradation (ERAD) of HMGCR via recruitment of the reductase to the ubiquitin ligase RNF139. This chain is Insulin-induced gene 2 protein, found in Mus musculus (Mouse).